The following is a 692-amino-acid chain: Elongation factor G (692 aa).

Residues 8–283 (KNTRNIGIMA…AVVDYLPSPV (276 aa)) form the tr-type G domain. GTP contacts are provided by residues 17–24 (AHIDAGKT), 81–85 (DTPGH), and 135–138 (NKMD).

This sequence belongs to the TRAFAC class translation factor GTPase superfamily. Classic translation factor GTPase family. EF-G/EF-2 subfamily.

Its subcellular location is the cytoplasm. Functionally, catalyzes the GTP-dependent ribosomal translocation step during translation elongation. During this step, the ribosome changes from the pre-translocational (PRE) to the post-translocational (POST) state as the newly formed A-site-bound peptidyl-tRNA and P-site-bound deacylated tRNA move to the P and E sites, respectively. Catalyzes the coordinated movement of the two tRNA molecules, the mRNA and conformational changes in the ribosome. In Exiguobacterium sp. (strain ATCC BAA-1283 / AT1b), this protein is Elongation factor G.